The sequence spans 154 residues: Small ribosomal subunit protein bS16 (154 aa).

Residues 111–121 are compositionally biased toward low complexity; the sequence is AAAGLAEAPTK. Positions 111–154 are disordered; it reads AAAGLAEAPTKPAKKAAKAEAAPKTDEAAPKTEEQAGAGSGEQG. The span at 127-144 shows a compositional bias: basic and acidic residues; it reads AKAEAAPKTDEAAPKTEE.

It belongs to the bacterial ribosomal protein bS16 family.

This chain is Small ribosomal subunit protein bS16, found in Salinispora tropica (strain ATCC BAA-916 / DSM 44818 / JCM 13857 / NBRC 105044 / CNB-440).